The chain runs to 263 residues: Oxidoreductase UcpA (263 aa).

10 to 32 lines the NAD(+) pocket; it reads LITGALQGIGEGIARTFARHGAN. Serine 141 contacts substrate. The active-site Proton acceptor is tyrosine 155.

This sequence belongs to the short-chain dehydrogenases/reductases (SDR) family.

This Escherichia coli O157:H7 protein is Oxidoreductase UcpA (ucpA).